Reading from the N-terminus, the 695-residue chain is Nucleoprotein (695 aa).

Coiled coils occupy residues 316-341 (VNVG…RRHE) and 372-399 (QTLA…VEDQ). 2 disordered regions span residues 424 to 458 (QARP…SFVD) and 483 to 615 (TSRE…AREA). Residues 438–447 (VDDKIEHEST) show a composition bias toward basic and acidic residues. Composition is skewed to polar residues over residues 494-505 (PGQSQDLDNSQG) and 537-552 (TTDS…SDNE). The short motif at 603 to 606 (PSAP) is the PTAP/PSAP motif element.

This sequence belongs to the filoviruses nucleoprotein family. Homooligomer. Homomultimerizes to form the nucleocapsid. Binds to viral genomic RNA. Interacts with VP35 and VP30 to form the nucleocapsid. Also interacts with VP24 and VP40. In terms of processing, phosphorylated.

The protein localises to the virion. It localises to the host cytoplasm. Its function is as follows. Encapsidates the genome, protecting it from nucleases. The encapsidated genomic RNA is termed the nucleocapsid and serves as template for transcription and replication. During replication, encapsidation by NP is coupled to RNA synthesis and all replicative products are resistant to nucleases. The chain is Nucleoprotein (NP) from Lake Victoria marburgvirus (strain Ozolin-75) (MARV).